A 641-amino-acid polypeptide reads, in one-letter code: Uromodulin (641 aa).

The signal sequence occupies residues 1-24; that stretch reads MGQPPLTWMLMVVVASWFITTAAT. N-linked (GlcNAc...) asparagine glycosylation is present at Asn25. Residues 28 to 64 enclose the EGF-like 1 domain; the sequence is EARWCSECHSNATCTEDEAVTTCTCQEGFTGDGLTCV. 21 cysteine pairs are disulfide-bonded: Cys32/Cys41, Cys35/Cys50, Cys52/Cys63, Cys69/Cys83, Cys77/Cys92, Cys94/Cys106, Cys112/Cys126, Cys120/Cys135, Cys137/Cys148, Cys150/Cys161, Cys155/Cys170, Cys174/Cys267, Cys195/Cys282, Cys217/Cys255, Cys223/Cys287, Cys248/Cys256, Cys297/Cys306, Cys300/Cys315, Cys317/Cys347, Cys335/Cys425, and Cys366/Cys389. In terms of domain architecture, EGF-like 2; calcium-binding spans 65-107; sequence DLDECAIPGAHNCSANSSCVNTPGSFSCVCPEGFRLSPGLGCT. N-linked (GlcNAc...) asparagine glycosylation occurs at Asn76. The EGF-like 3; calcium-binding domain occupies 108–149; sequence DVDECAEPGLSHCHALATCVNVVGNYLCVCPAGYRGDGWHCE. A beta hairpin region spans residues 150–171; it reads CSPGSCGPGLDCVPEGDALVCA. The interval 172–291 is D10C; the sequence is DPCQAHRTLD…CHLAYCTDPS (120 aa). N-linked (GlcNAc...) asparagine glycosylation is present at Asn232. Asn275 carries an N-linked (GlcNAc...) asparagine glycan. One can recognise an EGF-like 4 domain in the interval 292–323; the sequence is SVEGTCEECSIDEDCKSDNGRWHCQCKQDFNI. An N-linked (GlcNAc...) asparagine glycan is attached at Asn322. A ZP-N region spans residues 334–429; that stretch reads ECGANDMKVS…KINFACSYPL (96 aa). A ZP domain is found at 334-589; it reads ECGANDMKVS…PTCSGTRFRS (256 aa). The tract at residues 430 to 453 is flexible ZP-N/ZP-C linker; important for secretion and polymerization into filaments; sequence DMKVSLKTSLQPVVSALNITVGGT. Residue Asn447 is glycosylated (N-linked (GlcNAc...) asparagine). Positions 454 to 464 are internal hydrophobic patch (IHP); it reads GMFTVRMALFQ. The segment at 454–589 is ZP-C; it reads GMFTVRMALF…PTCSGTRFRS (136 aa). Disulfide bonds link Cys506/Cys566, Cys527/Cys582, and Cys571/Cys578. The interval 586–589 is essential for cleavage by HPN; sequence RFRS. The segment at 598–606 is external hydrophobic patch (EHP); regulates polymerization into filaments; that stretch reads VLNLGPITR. Ser614 carries GPI-anchor amidated serine lipidation. A propeptide spans 615 to 641 (removed in mature form); it reads RAAFSSLGLLKVWLPLLLSATLTLTFQ.

As to quaternary structure, homodimer that then polymerizes into long filaments. The filaments can additionally assemble laterally to form a sheet. The filaments consist of a zigzag-shaped backbone with laterally protruding arms which interact with bacterial adhesin fimH. Two fimH molecules can bind to a single UMOD monomer. In terms of processing, N-glycosylated. Proteolytically cleaved at a conserved C-terminal proteolytic cleavage site to generate the secreted form found in urine. This cleavage is catalyzed by HPN.

It localises to the apical cell membrane. The protein resides in the basolateral cell membrane. The protein localises to the cell projection. It is found in the cilium membrane. Its subcellular location is the secreted. Its function is as follows. Functions in biogenesis and organization of the apical membrane of epithelial cells of the thick ascending limb of Henle's loop (TALH), where it promotes formation of complex filamentous gel-like structure that may play a role in the water barrier permeability. May serve as a receptor for binding and endocytosis of cytokines (IL-1, IL-2) and TNF. Facilitates neutrophil migration across renal epithelia. In the urine, may contribute to colloid osmotic pressure, retards passage of positively charged electrolytes, and inhibits formation of liquid containing supersaturated salts and subsequent formation of salt crystals. Protects against urinary tract infections by binding to type 1 fimbriated E.coli. Binds to bacterial adhesin fimH which mediates the stable formation of bacterial aggregates, prevents the binding of E.coli to uroplakins UPK1A and UPK1B which act as urothelial receptors for type I fimbriae, and allows for pathogen clearance through micturation. Also promotes aggregation of other bacteria including K.pneumoniae, P.aeruginosa and S.mitis and so may also protect against other uropathogens. In Pongo abelii (Sumatran orangutan), this protein is Uromodulin (UMOD).